The sequence spans 192 residues: Phosphoheptose isomerase (192 aa).

In terms of domain architecture, SIS spans 37-192 (LADSFKAGGK…IQLIEKEMVK (156 aa)). 52-54 (NGG) contributes to the substrate binding site. 2 residues coordinate Zn(2+): His61 and Glu65. Substrate is bound by residues Glu65, 93-94 (ND), 119-121 (STS), Ser124, and Gln172. Residues Gln172 and His180 each coordinate Zn(2+).

This sequence belongs to the SIS family. GmhA subfamily. In terms of assembly, homotetramer. Zn(2+) serves as cofactor.

The protein resides in the cytoplasm. It carries out the reaction 2 D-sedoheptulose 7-phosphate = D-glycero-alpha-D-manno-heptose 7-phosphate + D-glycero-beta-D-manno-heptose 7-phosphate. Its pathway is carbohydrate biosynthesis; D-glycero-D-manno-heptose 7-phosphate biosynthesis; D-glycero-alpha-D-manno-heptose 7-phosphate and D-glycero-beta-D-manno-heptose 7-phosphate from sedoheptulose 7-phosphate: step 1/1. Its function is as follows. Catalyzes the isomerization of sedoheptulose 7-phosphate in D-glycero-D-manno-heptose 7-phosphate. The sequence is that of Phosphoheptose isomerase from Salmonella dublin (strain CT_02021853).